Consider the following 293-residue polypeptide: Sodium-type flagellar protein MotY (293 aa).

A signal peptide spans 1–21 (MNKWLITSGVMLSLLSANSYA). An OmpA-like domain is found at 175-292 (YSFEDIAFTI…RVVISLGRTQ (118 aa)).

The protein localises to the cell membrane. In terms of biological role, may play the role of a stator in the sodium flagellar motor, stabilizing the force-generating unit through direct interaction with the cell wall. This Vibrio parahaemolyticus serotype O3:K6 (strain RIMD 2210633) protein is Sodium-type flagellar protein MotY.